Consider the following 322-residue polypeptide: AA9 family lytic polysaccharide monooxygenase A (322 aa).

Positions 1–15 are cleaved as a signal peptide; that stretch reads MKVLSLLAAASAASA. Cu(2+) contacts are provided by His-16 and His-96. Intrachain disulfides connect Cys-54-Cys-182 and Cys-152-Cys-237. Residues His-168 and Gln-177 each coordinate O2. Residues Thr-228 and Thr-236 are each glycosylated (O-linked (Man...) threonine). A CBM1 domain is found at 286–322; the sequence is CTAAQWAQCGGMGFSGCTTCASPYTCKKMNDYYSQCS.

This sequence belongs to the polysaccharide monooxygenase AA9 family. The cofactor is Cu(2+).

The protein resides in the secreted. It catalyses the reaction [(1-&gt;4)-beta-D-glucosyl]n+m + reduced acceptor + O2 = 4-dehydro-beta-D-glucosyl-[(1-&gt;4)-beta-D-glucosyl]n-1 + [(1-&gt;4)-beta-D-glucosyl]m + acceptor + H2O.. In terms of biological role, lytic polysaccharide monooxygenase (LPMO) that depolymerizes crystalline and amorphous polysaccharides via the oxidation of scissile alpha- or beta-(1-4)-glycosidic bonds, yielding C4 oxidation products. Catalysis by LPMOs requires the reduction of the active-site copper from Cu(II) to Cu(I) by a reducing agent and H(2)O(2) or O(2) as a cosubstrate. Active on tamarind xyloglucan and konjac glucomannan. The protein is AA9 family lytic polysaccharide monooxygenase A (gh61-1) of Neurospora crassa (strain ATCC 24698 / 74-OR23-1A / CBS 708.71 / DSM 1257 / FGSC 987).